The chain runs to 3326 residues: Deoxyribonuclease CdiA (3326 aa).

Positions 36–342 are two-partner system transport domain (TPS); it reads TADGVLTSGG…ARGALTLTGS (307 aa). An FHA-1 region spans residues 343 to 1396; that stretch reads YAGAGSLYSD…ITVRTGTLTN (1054 aa). Residues 1397–1765 are receptor binding domain (RBD); sequence QREGLVVTES…QQLGSPSLTD (369 aa). Residues 1766-1951 are YP domain; that stretch reads YPLPTSQSGL…LAQADKTNLQ (186 aa). A periplasmic FHA-1 repeat (pFR) region spans residues 1959–2097; it reads SVSLSAGGDI…AGGPLQLAAG (139 aa). The tract at residues 2125-2660 is FHA-2; sequence QGLVQSTVAS…SNRYDSKQTS (536 aa). Positions 3060–3063 match the VENN CT cleavage motif motif; it reads VENN. The segment at 3060–3326 is CT domain; it reads VENNSLGDIA…DRNRQIGVIK (267 aa).

In the N-terminal section; belongs to the CdiA toxin family. As to quaternary structure, the C-terminal (CT) domain interacts with cognate CdiI but not non-cognate CdiI from E.coli strain 536 / UPEC.

The protein resides in the target cell. The protein localises to the target cell cytoplasm. In terms of biological role, toxic component of a toxin-immunity protein module, which functions as a cellular contact-dependent growth inhibition (CDI) system. CDI modules allow bacteria to communicate with and inhibit the growth of closely related neighboring bacteria in a contact-dependent fashion. CDI is neutralized by its cognate immunity protein CdiI, but not by non-cognate CdiI from other bacteria. The C-terminal domain (CT) has strong DNase activity; this activity is inhibited by cognate CdiI. Its function is as follows. The CdiA protein is thought to be exported from the cell through the central lumen of CdiB, the other half of its two-partner system (TPS). The TPS domain probably remains associated with CdiB while the FHA-1 domain forms an extended filament with the receptor-binding domain (RBD) at its extremity; in the secretion arrested state the C-terminus of the RBD and YP domains form a hairpin-like structure as the FHA-2, PT and CT domains are periplasmic. The YP domain is probably responsible for this arrest at the point where it re-enters the host cell periplasm. Upon binding to a target cell outer membrane receptor a signal is transmitted to activate secretion. The filament elongates slightly, the rest of CdiA is secreted and the FHA-2 domain becomes stably associated with the target cell's outer membrane where it facilitates entry of the toxic CT domain into the target cell periplasm. From there the toxic CT domain is cleaved and gains access to the target cell cytoplasm via an inner membrane protein. In Dickeya dadantii (strain 3937) (Erwinia chrysanthemi (strain 3937)), this protein is Deoxyribonuclease CdiA.